Reading from the N-terminus, the 153-residue chain is Regulator of sigma D (153 aa).

Belongs to the Rsd/AlgQ family. Interacts with RpoD.

It is found in the cytoplasm. Functionally, binds RpoD and negatively regulates RpoD-mediated transcription activation by preventing the interaction between the primary sigma factor RpoD with the catalytic core of the RNA polymerase and with promoter DNA. May be involved in replacement of the RNA polymerase sigma subunit from RpoD to RpoS during the transition from exponential growth to the stationary phase. The sequence is that of Regulator of sigma D from Pectobacterium atrosepticum (strain SCRI 1043 / ATCC BAA-672) (Erwinia carotovora subsp. atroseptica).